The primary structure comprises 223 residues: Deoxyribose-phosphate aldolase (223 aa).

Asp-89 acts as the Proton donor/acceptor in catalysis. Lys-152 (schiff-base intermediate with acetaldehyde) is an active-site residue. The active-site Proton donor/acceptor is Lys-181.

It belongs to the DeoC/FbaB aldolase family. DeoC type 1 subfamily.

The protein localises to the cytoplasm. The enzyme catalyses 2-deoxy-D-ribose 5-phosphate = D-glyceraldehyde 3-phosphate + acetaldehyde. Its pathway is carbohydrate degradation; 2-deoxy-D-ribose 1-phosphate degradation; D-glyceraldehyde 3-phosphate and acetaldehyde from 2-deoxy-alpha-D-ribose 1-phosphate: step 2/2. Functionally, catalyzes a reversible aldol reaction between acetaldehyde and D-glyceraldehyde 3-phosphate to generate 2-deoxy-D-ribose 5-phosphate. The polypeptide is Deoxyribose-phosphate aldolase (Bacillus cereus (strain ATCC 14579 / DSM 31 / CCUG 7414 / JCM 2152 / NBRC 15305 / NCIMB 9373 / NCTC 2599 / NRRL B-3711)).